The primary structure comprises 93 residues: Small ribosomal subunit protein uS19 (93 aa).

It belongs to the universal ribosomal protein uS19 family.

In terms of biological role, protein S19 forms a complex with S13 that binds strongly to the 16S ribosomal RNA. This is Small ribosomal subunit protein uS19 from Salinispora tropica (strain ATCC BAA-916 / DSM 44818 / JCM 13857 / NBRC 105044 / CNB-440).